Consider the following 281-residue polypeptide: Diaminopimelate epimerase (281 aa).

Residues asparagine 13, glutamine 46, and asparagine 66 each contribute to the substrate site. The Proton donor role is filled by cysteine 75. Substrate is bound by residues glycine 76–asparagine 77, asparagine 160, asparagine 193, and glutamate 211–arginine 212. The Proton acceptor role is filled by cysteine 220. Glycine 221–threonine 222 is a binding site for substrate.

This sequence belongs to the diaminopimelate epimerase family. In terms of assembly, homodimer.

The protein resides in the cytoplasm. It carries out the reaction (2S,6S)-2,6-diaminopimelate = meso-2,6-diaminopimelate. The protein operates within amino-acid biosynthesis; L-lysine biosynthesis via DAP pathway; DL-2,6-diaminopimelate from LL-2,6-diaminopimelate: step 1/1. In terms of biological role, catalyzes the stereoinversion of LL-2,6-diaminopimelate (L,L-DAP) to meso-diaminopimelate (meso-DAP), a precursor of L-lysine and an essential component of the bacterial peptidoglycan. The protein is Diaminopimelate epimerase of Acinetobacter baumannii (strain AB307-0294).